We begin with the raw amino-acid sequence, 395 residues long: ATP phosphoribosyltransferase regulatory subunit (395 aa).

The protein belongs to the class-II aminoacyl-tRNA synthetase family. HisZ subfamily. As to quaternary structure, heteromultimer composed of HisG and HisZ subunits.

Its subcellular location is the cytoplasm. It functions in the pathway amino-acid biosynthesis; L-histidine biosynthesis; L-histidine from 5-phospho-alpha-D-ribose 1-diphosphate: step 1/9. In terms of biological role, required for the first step of histidine biosynthesis. May allow the feedback regulation of ATP phosphoribosyltransferase activity by histidine. The protein is ATP phosphoribosyltransferase regulatory subunit of Pseudomonas fluorescens (strain ATCC BAA-477 / NRRL B-23932 / Pf-5).